Consider the following 221-residue polypeptide: ATP-dependent dethiobiotin synthetase BioD (221 aa).

13–18 (DIGKTY) provides a ligand contact to ATP. Residue Thr-17 coordinates Mg(2+). Residue Lys-38 is part of the active site. Substrate is bound at residue Ser-42. ATP is bound by residues Asp-51, 112–115 (EGSG), and 176–177 (NR). Asp-51 and Glu-112 together coordinate Mg(2+).

Belongs to the dethiobiotin synthetase family. As to quaternary structure, homodimer. It depends on Mg(2+) as a cofactor.

Its subcellular location is the cytoplasm. The enzyme catalyses (7R,8S)-7,8-diammoniononanoate + CO2 + ATP = (4R,5S)-dethiobiotin + ADP + phosphate + 3 H(+). It participates in cofactor biosynthesis; biotin biosynthesis; biotin from 7,8-diaminononanoate: step 1/2. Functionally, catalyzes a mechanistically unusual reaction, the ATP-dependent insertion of CO2 between the N7 and N8 nitrogen atoms of 7,8-diaminopelargonic acid (DAPA, also called 7,8-diammoniononanoate) to form a ureido ring. In Brachyspira hyodysenteriae (strain ATCC 49526 / WA1), this protein is ATP-dependent dethiobiotin synthetase BioD.